The following is a 193-amino-acid chain: MAKNAKFRVPFRRRREGKTDFRQRLGLLLSGKPRLVARKSLNNVTAQLMSYDEKGDVVLVSAHTKELVKMGYKGHCGNLPAAYLTGLLLGKKAVKEGAEEAILDKGLHRATKGAAIFAVLKGALDAGMDIPHGDEIIAEEERLNGTHVKNYAESLKEDADAYKKQFSKYLEKGLNPEDLPEHVAELKEKILNL.

Belongs to the universal ribosomal protein uL18 family. As to quaternary structure, part of the 50S ribosomal subunit. Contacts the 5S and 23S rRNAs.

Functionally, this is one of the proteins that bind and probably mediate the attachment of the 5S RNA into the large ribosomal subunit, where it forms part of the central protuberance. This Methanococcus maripaludis (strain C5 / ATCC BAA-1333) protein is Large ribosomal subunit protein uL18.